Reading from the N-terminus, the 827-residue chain is Probable inorganic carbon transporter subunit DabA2 (827 aa).

Zn(2+)-binding residues include cysteine 351, aspartate 353, histidine 524, and cysteine 539.

Belongs to the inorganic carbon transporter (TC 9.A.2) DabA family. As to quaternary structure, forms a complex with DabB2, possibly a heterodimer. The cofactor is Zn(2+).

Its subcellular location is the cell inner membrane. Its activity is regulated as follows. Uptake of inorganic carbon by cells in the presence of thiosulphate is fully inhibited by the uncouplers carbonyl cyanide m-chlorophenyl hydrazone (CCCP), carbonyl cyanide p-trifluoromethoxyphenyl hydrazone (FCCP), S13 or SF6847. Not inhibited by the ATPase inhibitor N,N-dicyclohexylcarbodiimide (DCCD). Inorganic carbon uptake is inhibited by the ionophore CCCP, suggesting uptake is coupled to a cation gradient. Functionally, part of an energy-coupled inorganic carbon pump; its substrate may be carbon dioxide. Expression of both dabA2 and dabB2 (DAB2) restores growth in ambient air to E.coli deleted of its carbonic anhydrase genes (called CAfree, deletion of 'can' and 'cynT'); neither dabA2 or dabB2 alone is sufficient. Rescue is pH-independent, suggesting it transports CO(2) and not carbonate ions. Together the genes allow greater than normal uptake of inorganic carbon by E.coli. Uptake of carbon dioxide rather than bicarbonate has been suggested based on kinetic calculations. The protein is Probable inorganic carbon transporter subunit DabA2 of Halothiobacillus neapolitanus (strain ATCC 23641 / c2) (Thiobacillus neapolitanus).